The primary structure comprises 224 residues: Envelope glycoprotein L (224 aa).

The first 22 residues, 1 to 22, serve as a signal peptide directing secretion; it reads MGILGWVGLIAVGVLCVRGGLS. The interaction with gH stretch occupies residues 20 to 161; sequence GLSSTEYVIR…FDYSRTRRCV (142 aa). Positions 20-161 are interaction with gL; that stretch reads GLSSTEYVIR…FDYSRTRRCV (142 aa). The 179-residue stretch at 23-201 folds into the gL alphaherpesvirus-type domain; that stretch reads STEYVIRSRV…LTTPPPIIAT (179 aa). 2 disulfides stabilise this stretch: C44–C76 and C149–C160. The tract at residues 161-224 is disordered; the sequence is VGRQDLGPTN…RRRRPHSRRL (64 aa). The N-linked (GlcNAc...) asparagine; by host glycan is linked to N170. Residues 213 to 224 show a composition bias toward basic residues; the sequence is KSRRRRPHSRRL.

It belongs to the herpesviridae glycoprotein L (gL) family. Alphaherpesvirinae gL subfamily. In terms of assembly, interacts with glycoprotein H (gH); this interaction is necessary for the correct processing and cell surface expression of gH. The heterodimer gH/gL seems to interact with gB trimers during fusion. N-glycosylated, O-glycosylated, and sialylated.

The protein localises to the virion membrane. It is found in the host cell membrane. Its subcellular location is the host Golgi apparatus. It localises to the host trans-Golgi network. The heterodimer glycoprotein H-glycoprotein L is required for the fusion of viral and plasma membranes leading to virus entry into the host cell. Acts as a functional inhibitor of gH and maintains gH in an inhibited form. Upon binding to host integrins, gL dissociates from gH leading to activation of the viral fusion glycoproteins gB and gH. The protein is Envelope glycoprotein L of Human herpesvirus 1 (strain KOS) (HHV-1).